We begin with the raw amino-acid sequence, 201 residues long: Ribonuclease HII (201 aa).

Positions 11 to 201 (LRECGCDEAG…VVDADRPTTE (191 aa)) constitute an RNase H type-2 domain. Asp-17, Glu-18, and Asp-109 together coordinate a divalent metal cation.

The protein belongs to the RNase HII family. The cofactor is Mn(2+). Mg(2+) serves as cofactor.

Its subcellular location is the cytoplasm. It carries out the reaction Endonucleolytic cleavage to 5'-phosphomonoester.. Functionally, endonuclease that specifically degrades the RNA of RNA-DNA hybrids. The polypeptide is Ribonuclease HII (rnhB) (Porphyromonas gingivalis (strain ATCC BAA-308 / W83)).